The following is a 122-amino-acid chain: Large ribosomal subunit protein bL17 (122 aa).

The protein belongs to the bacterial ribosomal protein bL17 family. As to quaternary structure, part of the 50S ribosomal subunit. Contacts protein L32.

The polypeptide is Large ribosomal subunit protein bL17 (Neisseria gonorrhoeae (strain ATCC 700825 / FA 1090)).